We begin with the raw amino-acid sequence, 521 residues long: Cytochrome P450 1A1 (521 aa).

Phe229 serves as a coordination point for substrate. Heme is bound at residue Cys463.

Belongs to the cytochrome P450 family. Heme serves as cofactor.

It is found in the endoplasmic reticulum membrane. The protein resides in the microsome membrane. The catalysed reaction is an organic molecule + reduced [NADPH--hemoprotein reductase] + O2 = an alcohol + oxidized [NADPH--hemoprotein reductase] + H2O + H(+). Cytochromes P450 are a group of heme-thiolate monooxygenases. They oxidize a variety of structurally unrelated compounds, including steroids, fatty acids, and xenobiotics. This is Cytochrome P450 1A1 (cyp1a1) from Oryzias latipes (Japanese rice fish).